The chain runs to 417 residues: Solute carrier family 25 member 46-A (417 aa).

Over residues 1 to 13 (MQPRRPDRFDGLE) the composition is skewed to basic and acidic residues. The interval 1 to 90 (MQPRRPDRFD…AFGEENSNSA (90 aa)) is disordered. A compositionally biased stretch (low complexity) spans 31-41 (SSFPARSFSSS). The stretch at 95-186 (QLNRFAGFGI…GILSEFTHLP (92 aa)) is one Solcar 1 repeat. 6 helical membrane passes run 102–122 (FGIG…CIVL), 162–182 (MGST…LSEF), 198–218 (IGGH…FYSA), 257–277 (LLPL…HYIV), 313–333 (FPEL…LYPL), and 382–402 (LGFY…AIVL). A Solcar 2 repeat occupies 310 to 415 (EDYFPELIAN…KIIYSSVVQT (106 aa)).

The protein belongs to the mitochondrial carrier (TC 2.A.29) family.

Its subcellular location is the mitochondrion outer membrane. Functionally, may play a role in mitochondrial dynamics by controlling mitochondrial membrane fission. This is Solute carrier family 25 member 46-A (slc25a46-a) from Xenopus laevis (African clawed frog).